We begin with the raw amino-acid sequence, 317 residues long: Sulfate adenylyltransferase subunit 2 (317 aa).

2 disordered regions span residues 1-21 (MPDS…APLD) and 298-317 (RAID…EGYF).

The protein belongs to the PAPS reductase family. CysD subfamily. As to quaternary structure, heterodimer composed of CysD, the smaller subunit, and CysN.

The catalysed reaction is sulfate + ATP + H(+) = adenosine 5'-phosphosulfate + diphosphate. The protein operates within sulfur metabolism; hydrogen sulfide biosynthesis; sulfite from sulfate: step 1/3. With CysN forms the ATP sulfurylase (ATPS) that catalyzes the adenylation of sulfate producing adenosine 5'-phosphosulfate (APS) and diphosphate, the first enzymatic step in sulfur assimilation pathway. APS synthesis involves the formation of a high-energy phosphoric-sulfuric acid anhydride bond driven by GTP hydrolysis by CysN coupled to ATP hydrolysis by CysD. The protein is Sulfate adenylyltransferase subunit 2 of Rhizobium etli (strain ATCC 51251 / DSM 11541 / JCM 21823 / NBRC 15573 / CFN 42).